We begin with the raw amino-acid sequence, 264 residues long: Short chain dehydrogenase/reductase AacuN (264 aa).

The NADP(+) site is built by Ile-24, Asp-70, Asn-97, and Arg-130. Residues Ser-146, Ser-147, and Tyr-161 each act as proton donor in the active site. Positions 161, 165, and 196 each coordinate NADP(+). The Lowers pKa of active site Tyr role is filled by Lys-165.

Belongs to the short-chain dehydrogenases/reductases (SDR) family.

The catalysed reaction is 3,8,9,10-tetrahydroxy-6-methyl-1,4-dihydroanthracen-1-one + NADPH + H(+) = (3R)-3,8,9,10-tetrahydroxy-6-methyl-1,2,3,4-tetrahydroanthracen-1-one + NADP(+). The protein operates within secondary metabolite biosynthesis. Its function is as follows. Atrochrysone carboxylic acid synthase; part of the gene cluster that mediates the biosynthesis of the tetrahydroxanthone dimer secalonic acid D. The pathway begins with the synthesis of atrochrysone thioester by the polyketide synthase AacuL. The atrochrysone carboxyl ACP thioesterase AacuM then breaks the thioester bond and releases the atrochrysone carboxylic acid from AacuL. Atrochrysone carboxylic acid is decarboxylated by the decarboxylase AacuI, and oxidized by the anthrone oxygenase AacuG to yield emodin. Emodin is then reduced to emodin hydroquinone by a yet unidentified oxidoreductase. A-ring reduction by the short chain dehydrogenase AacuN, dehydration by the scytalone dehydratase-like protein AacuK and probable spontaneous re-oxidation, results in overall deoxygenation to chrysophanol. Baeyer-Villiger oxidation by the Baeyer-Villiger monooxygenase (BVMO) AacuH then yields monodictyphenone. Monodictyphenone is transformed into compounds with the tetrahydroxanthone skeleton via methylesterification by the methyltransferase AacuQ, followed by the action of the flavin-dependent monooxygenase AacuC, the isomerase AacuP, and the short chain dehydrogenase/reductase AacuF or AacuD. AacuF and AacuD should accept the same compound as a substrate but perform the ketoreduction with a different stereoselectivity, thus yielding blennolides B and A, respectively. In the final step of the biosynthesis, the cytochrome P450 monooxygenase AacuE accepts blennolide B and/or blennolide A to conduct the dimerization reaction to furnish the tetrahydroxanthone dimers, secalonic acids D, B, and F. The chain is Short chain dehydrogenase/reductase AacuN from Aspergillus aculeatus (strain ATCC 16872 / CBS 172.66 / WB 5094).